The primary structure comprises 74 residues: Protein SMIM7 homolog (74 aa).

A helical transmembrane segment spans residues 53–73; sequence FRAFIGLWNIFIMFLMLVFFG.

The protein belongs to the SMIM7 family.

It localises to the membrane. In Ixodes scapularis (Black-legged tick), this protein is Protein SMIM7 homolog.